A 196-amino-acid chain; its full sequence is Cupin-domain-containing oxidoreductase srdD (196 aa).

Positions aspartate 99–methionine 165 are cupin-like domain.

It belongs to the virC family.

Its function is as follows. Highly reducing polyketide synthase; part of the gene cluster that mediates the biosynthesis of sordarial, a salicylic aldehyde structurally related to the phytotoxin pyriculol. The most interesting aspect of this pathway is formation of an aromatic product from the highly reducing polyketide synthase srdA. SrdA synthesizes a reduced polyketide chain from one molecule of acetyl-CoA and five molecules of malonyl-CoA. The polyketide chain is then reductively released as an aldehyde. The oxidoreductases srdC, srdD and srdE then oxidize one of the hydroxy groups to facilitate the intramolecular aldol condensation, followed by dehydration to yield a salicylic aldehyde. This aldehyde can undergo facile reduction by endogenous reductases to yield the alcohol 1-hydroxy-2-hydroxymethyl-3-pent-1,3-dienylbenzene. The flavin-dependent srdI counteract against the propensity of the aldehydes to be reduced under physiological conditions and is responsible for reoxidizing 1-hydroxy-2-hydroxymethyl-3-pent-1,3-dienylbenzene back to the salicylic aldehyde. This salicylic aldehyde is then selectively epoxidized by the cupin-domain-containing oxidoreductase srdB to yield the epoxide, which can be hydrolyzed stereoselectively by the hydrolase srdG to give the final product sordarial. The polypeptide is Cupin-domain-containing oxidoreductase srdD (Neurospora crassa (strain ATCC 24698 / 74-OR23-1A / CBS 708.71 / DSM 1257 / FGSC 987)).